The following is a 596-amino-acid chain: Aspartate--tRNA(Asp/Asn) ligase (596 aa).

Glu-175 contributes to the L-aspartate binding site. The interval 199-202 (QMFK) is aspartate. Residues Arg-221 and His-451 each coordinate L-aspartate. Position 221–223 (221–223 (RDE)) interacts with ATP. Position 485 (Glu-485) interacts with ATP. Arg-492 is an L-aspartate binding site. An ATP-binding site is contributed by 537–540 (GVDR).

Belongs to the class-II aminoacyl-tRNA synthetase family. Type 1 subfamily. As to quaternary structure, homodimer.

Its subcellular location is the cytoplasm. The catalysed reaction is tRNA(Asx) + L-aspartate + ATP = L-aspartyl-tRNA(Asx) + AMP + diphosphate. In terms of biological role, aspartyl-tRNA synthetase with relaxed tRNA specificity since it is able to aspartylate not only its cognate tRNA(Asp) but also tRNA(Asn). Reaction proceeds in two steps: L-aspartate is first activated by ATP to form Asp-AMP and then transferred to the acceptor end of tRNA(Asp/Asn). The protein is Aspartate--tRNA(Asp/Asn) ligase of Zymomonas mobilis subsp. mobilis (strain ATCC 31821 / ZM4 / CP4).